The following is a 583-amino-acid chain: cAMP-dependent protein kinase catalytic subunit 3 (583 aa).

2 disordered regions span residues alanine 51–lysine 75 and serine 98–lysine 264. 2 stretches are compositionally biased toward polar residues: residues threonine 52–proline 69 and serine 98–leucine 107. Positions threonine 108–serine 162 are enriched in low complexity. Over residues aspartate 163–glutamine 176 the composition is skewed to acidic residues. The segment covering proline 181–serine 200 has biased composition (low complexity). Acidic residues predominate over residues asparagine 205 to glycine 219. Over residues glycine 221 to serine 234 the composition is skewed to basic and acidic residues. Residues glutamate 235–glutamate 256 show a composition bias toward acidic residues. Residues tyrosine 274–phenylalanine 528 enclose the Protein kinase domain. ATP is bound by residues valine 280–valine 288 and lysine 303. Aspartate 397 serves as the catalytic Proton acceptor. Residues lysine 529–phenylalanine 583 form the AGC-kinase C-terminal domain.

This sequence belongs to the protein kinase superfamily. AGC Ser/Thr protein kinase family. cAMP subfamily. In terms of tissue distribution, expressed in embryonic mesoderm, and the optic lamina, wing disk and leg disks of third instar larvae. More abundant in adult head than adult body.

It catalyses the reaction L-seryl-[protein] + ATP = O-phospho-L-seryl-[protein] + ADP + H(+). The catalysed reaction is L-threonyl-[protein] + ATP = O-phospho-L-threonyl-[protein] + ADP + H(+). Its function is as follows. Does not have an essential role in development. This is cAMP-dependent protein kinase catalytic subunit 3 (Pka-C3) from Drosophila melanogaster (Fruit fly).